A 195-amino-acid chain; its full sequence is 2-cysteine peroxiredoxin, chloroplastic (195 aa).

A Thioredoxin domain is found at 3 to 161 (IRVGQKAPDF…ALRTLQAIQY (159 aa)). The Cysteine sulfenic acid (-SOH) intermediate role is filled by Cys49.

It belongs to the peroxiredoxin family. AhpC/Prx1 subfamily. As to quaternary structure, homodimer; disulfide-linked, upon oxidation.

The protein resides in the plastid. It is found in the chloroplast. It catalyses the reaction a hydroperoxide + [thioredoxin]-dithiol = an alcohol + [thioredoxin]-disulfide + H2O. Functionally, thiol-specific peroxidase that catalyzes the reduction of hydrogen peroxide and organic hydroperoxides to water and alcohols, respectively. Plays a role in cell protection against oxidative stress by detoxifying peroxides. In Chattonella marina var. antiqua (Red tide flagellate), this protein is 2-cysteine peroxiredoxin, chloroplastic.